The chain runs to 235 residues: Exotoxin type C (235 aa).

The N-terminal stretch at 1–27 is a signal peptide; sequence MKKINIIKIVFIITVILISTISPIIKS. Zn(2+) contacts are provided by His-194, His-228, and Asp-230.

It belongs to the staphylococcal/streptococcal toxin family.

In terms of biological role, superantigen that acts as a causative agent of the symptoms associated with scarlet fever. Has been associated with streptococcal toxic shock-like disease and may play a role in the early events of rheumatic fever. Superantigens cross-link major histocompatibility complex (MHC) class II and T-cell receptor (TCR) molecules, resulting in an overstimulation of T-cells associated with a massive release of pyrogenic and inflammatory cytokines. In Streptococcus pyogenes serotype M18 (strain MGAS8232), this protein is Exotoxin type C.